We begin with the raw amino-acid sequence, 92 residues long: Probable K(+)/H(+) antiporter subunit F (92 aa).

Helical transmembrane passes span 4-24 (AVVW…AFAL), 36-56 (RILG…TFGI), and 62-82 (VYFE…IALA).

This sequence belongs to the CPA3 antiporters (TC 2.A.63) subunit F family. As to quaternary structure, may form a hetero-oligomeric complex that consists of six subunits: PhaAB, PhaC, PhaD, PhaE, PhaF and PhaG.

The protein localises to the cell membrane. Its function is as follows. Part of a K(+) efflux system which is required for the adaptation of R.meliloti to alkaline pH as well as for the infection process during symbiotic nodule development. The protein is Probable K(+)/H(+) antiporter subunit F (phaF) of Rhizobium meliloti (strain 1021) (Ensifer meliloti).